Consider the following 87-residue polypeptide: Small ribosomal subunit protein bS20 (87 aa).

Residues 1 to 22 form a disordered region; sequence MANSAGSKKRARQAVKSRAHNG. Residues 7–19 show a composition bias toward basic residues; that stretch reads SKKRARQAVKSRA.

Belongs to the bacterial ribosomal protein bS20 family.

Its function is as follows. Binds directly to 16S ribosomal RNA. The polypeptide is Small ribosomal subunit protein bS20 (Marinomonas sp. (strain MWYL1)).